The primary structure comprises 211 residues: MTSQRTRERLIQRLYDEGLSNPQVLEVIRRTPRHLFVDEALAHRAYEDTALPIGHNQTISQPYMVARMSELLLAAGPLDKVLEIGTGSGYQTAVLSQLVERVFSVERIKVLQDRAKERLQELNLRNVVFRWGDGWEGWPALAPYNGIIVTAVATDIPQALLDQLAPGGRLVIPVGAGEVQQLMLIIREEQGFARHVLGAVRFVPLLNGPLA.

The active site involves Ser60.

This sequence belongs to the methyltransferase superfamily. L-isoaspartyl/D-aspartyl protein methyltransferase family.

It localises to the cytoplasm. The catalysed reaction is [protein]-L-isoaspartate + S-adenosyl-L-methionine = [protein]-L-isoaspartate alpha-methyl ester + S-adenosyl-L-homocysteine. Catalyzes the methyl esterification of L-isoaspartyl residues in peptides and proteins that result from spontaneous decomposition of normal L-aspartyl and L-asparaginyl residues. It plays a role in the repair and/or degradation of damaged proteins. This chain is Protein-L-isoaspartate O-methyltransferase, found in Pseudomonas fluorescens (strain ATCC BAA-477 / NRRL B-23932 / Pf-5).